Reading from the N-terminus, the 763-residue chain is 1,4-alpha-glucan branching enzyme GlgB (763 aa).

Asp437 serves as the catalytic Nucleophile. Glu488 functions as the Proton donor in the catalytic mechanism.

This sequence belongs to the glycosyl hydrolase 13 family. GlgB subfamily. In terms of assembly, monomer.

The catalysed reaction is Transfers a segment of a (1-&gt;4)-alpha-D-glucan chain to a primary hydroxy group in a similar glucan chain.. The protein operates within glycan biosynthesis; glycogen biosynthesis. Its function is as follows. Catalyzes the formation of the alpha-1,6-glucosidic linkages in glycogen by scission of a 1,4-alpha-linked oligosaccharide from growing alpha-1,4-glucan chains and the subsequent attachment of the oligosaccharide to the alpha-1,6 position. This is 1,4-alpha-glucan branching enzyme GlgB from Synechococcus sp. (strain JA-2-3B'a(2-13)) (Cyanobacteria bacterium Yellowstone B-Prime).